Here is a 160-residue protein sequence, read N- to C-terminus: Phosphopantetheine adenylyltransferase (160 aa).

Residue Thr10 coordinates substrate. ATP is bound by residues 10–11 (TF) and His18. Residues Lys42, Leu74, and Arg88 each coordinate substrate. Residues 89–91 (GLR), Glu99, and 124–130 (NSFISST) each bind ATP.

The protein belongs to the bacterial CoaD family. Homohexamer. Mg(2+) serves as cofactor.

It localises to the cytoplasm. It catalyses the reaction (R)-4'-phosphopantetheine + ATP + H(+) = 3'-dephospho-CoA + diphosphate. It participates in cofactor biosynthesis; coenzyme A biosynthesis; CoA from (R)-pantothenate: step 4/5. Its function is as follows. Reversibly transfers an adenylyl group from ATP to 4'-phosphopantetheine, yielding dephospho-CoA (dPCoA) and pyrophosphate. This Pseudoalteromonas atlantica (strain T6c / ATCC BAA-1087) protein is Phosphopantetheine adenylyltransferase.